The chain runs to 451 residues: 3-carboxy-cis,cis-muconate cycloisomerase (451 aa).

This sequence belongs to the class-II fumarase/aspartase family.

The catalysed reaction is 2-(carboxymethyl)-5-oxo-2,5-dihydro-2-furoate = 3-carboxy-cis,cis-muconate + H(+). In terms of biological role, catalyzes an anti cycloisomerization. In Bradyrhizobium diazoefficiens (strain JCM 10833 / BCRC 13528 / IAM 13628 / NBRC 14792 / USDA 110), this protein is 3-carboxy-cis,cis-muconate cycloisomerase (pcaB).